Here is a 1029-residue protein sequence, read N- to C-terminus: Sodium/potassium-transporting ATPase subunit alpha-4 (1029 aa).

The disordered stretch occupies residues 1-37 (MGLWGKKGTVAPHDQSPRRRPKKGLIKKKMVKREKQK). At 1-95 (MGLWGKKGTV…NTVTPPPTTP (95 aa)) the chain is on the cytoplasmic side. The segment covering 18–36 (RRRPKKGLIKKKMVKREKQ) has biased composition (basic residues). Residues 90 to 92 (PPP) form an interaction with phosphoinositide-3 kinase region. Residues 96-116 (EWVKFCKQLFGGFSLLLWTGA) traverse the membrane as a helical segment. The Extracellular portion of the chain corresponds to 117–139 (ILCFVAYSIQIYFNEEPTKDNLY). Residues 140–160 (LSIVLSVVVIVTGCFSYYQEA) form a helical membrane-spanning segment. Topologically, residues 161 to 296 (KSSKIMESFK…VGQTPIAAEI (136 aa)) are cytoplasmic. Positions 223–237 (NSSLTGESEPQSRSP) are enriched in polar residues. The tract at residues 223 to 242 (NSSLTGESEPQSRSPDFTHE) is disordered. A helical transmembrane segment spans residues 297–316 (EHFIHLITVVAVFLGVTFFA). Topologically, residues 317–328 (LSLLLGYGWLEA) are extracellular. A helical transmembrane segment spans residues 329–346 (IIFLIGIIVANVPEGLLA). At 347–778 (TVTVCLTLTA…EEGRLIFDNL (432 aa)) the chain is on the cytoplasmic side. Asp-384 serves as the catalytic 4-aspartylphosphate intermediate. The Mg(2+) site is built by Asp-723 and Asp-727. Residues 779 to 798 (KKSIMYTLTSNIPEITPFLM) traverse the membrane as a helical segment. Residues 799 to 808 (FIILGIPLPL) are Extracellular-facing. A helical membrane pass occupies residues 809-829 (GTITILCIDLGTDMVPAISLA). The Cytoplasmic segment spans residues 830–849 (YESAESDIMKRLPRNPKTDN). A helical transmembrane segment spans residues 850–872 (LVNHRLIGMAYGQIGMIQALAGF). The Extracellular segment spans residues 873–924 (FTYFVILAENGFRPVDLLGIRLHWEDKYLNDLEDSYGQQWTYEQRKVVEFTC). The helical transmembrane segment at 925–944 (QTAFFVTIVVVQWADLIISK) threads the bilayer. Residues 945–957 (TRRNSLFQQGMRN) are Cytoplasmic-facing. Position 949 is a phosphoserine; by PKA (Ser-949). Residues 958 to 976 (KVLIFGILEETLLAAFLSY) form a helical membrane-spanning segment. Residues 977–991 (TPGMDVALRMYPLKI) lie on the Extracellular side of the membrane. A helical transmembrane segment spans residues 992–1012 (TWWLCAIPYSILIFVYDEIRK). Over 1013 to 1029 (LLIRQHPDGWVERETYY) the chain is Cytoplasmic.

It belongs to the cation transport ATPase (P-type) (TC 3.A.3) family. Type IIC subfamily. The sodium/potassium-transporting ATPase is composed of a catalytic alpha subunit, an auxiliary non-catalytic beta subunit and an additional regulatory subunit. In terms of tissue distribution, specifically expressed in testis. Found in very low levels in skeletal muscle. Expressed in mature sperm (at protein level).

The protein localises to the cell membrane. The catalysed reaction is K(+)(out) + Na(+)(in) + ATP + H2O = K(+)(in) + Na(+)(out) + ADP + phosphate + H(+). Its activity is regulated as follows. Specifically inhibited by an endogenous cardiac glycoside, ouabain. Functionally, this is the catalytic component of the active enzyme, which catalyzes the hydrolysis of ATP coupled with the exchange of sodium and potassium ions across the plasma membrane. This action creates the electrochemical gradient of sodium and potassium ions, providing the energy for active transport of various nutrients. Plays a role in sperm motility. The sequence is that of Sodium/potassium-transporting ATPase subunit alpha-4 from Homo sapiens (Human).